The following is a 718-amino-acid chain: Methionine--tRNA ligase (718 aa).

The short motif at 27–37 (PYANGQIHIGH) is the 'HIGH' region element. Residues C158, C161, C171, and C174 each contribute to the Zn(2+) site. The 'KMSKS' region signature appears at 348 to 352 (KMSKS). ATP is bound at residue K351. A tRNA-binding domain is found at 612–718 (DFAKIDLRIA…SGAKPGMRVK (107 aa)).

It belongs to the class-I aminoacyl-tRNA synthetase family. MetG type 1 subfamily. In terms of assembly, homodimer. Zn(2+) serves as cofactor.

The protein resides in the cytoplasm. It catalyses the reaction tRNA(Met) + L-methionine + ATP = L-methionyl-tRNA(Met) + AMP + diphosphate. Its function is as follows. Is required not only for elongation of protein synthesis but also for the initiation of all mRNA translation through initiator tRNA(fMet) aminoacylation. The chain is Methionine--tRNA ligase from Burkholderia thailandensis (strain ATCC 700388 / DSM 13276 / CCUG 48851 / CIP 106301 / E264).